A 225-amino-acid chain; its full sequence is Superoxide dismutase [Mn], mitochondrial (225 aa).

The N-terminal 27 residues, 1-27, are a transit peptide targeting the mitochondrion; sequence MITAITRTALPRATLRTSLATMSTIRA. His-53, His-101, Asp-187, and His-191 together coordinate Mn(2+).

The protein belongs to the iron/manganese superoxide dismutase family. It depends on Mn(2+) as a cofactor.

It localises to the mitochondrion. The protein localises to the cytoplasm. It carries out the reaction 2 superoxide + 2 H(+) = H2O2 + O2. Its function is as follows. Destroys radicals which are normally produced within the cells and which are toxic to biological systems. Functionally, destroys mitochondrial radicals produced by oxidative stress. In terms of biological role, destroys cytoplasmic radicals produced in low copper environments; a condition which inactivates the cytoplasmic copper-dependent superoxide dismutase SOD1. The chain is Superoxide dismutase [Mn], mitochondrial from Cryptococcus neoformans var. grubii serotype A (strain H99 / ATCC 208821 / CBS 10515 / FGSC 9487) (Filobasidiella neoformans var. grubii).